The chain runs to 117 residues: Large ribosomal subunit protein bL19 (117 aa).

It belongs to the bacterial ribosomal protein bL19 family.

Functionally, this protein is located at the 30S-50S ribosomal subunit interface and may play a role in the structure and function of the aminoacyl-tRNA binding site. The sequence is that of Large ribosomal subunit protein bL19 from Phocaeicola vulgatus (strain ATCC 8482 / DSM 1447 / JCM 5826 / CCUG 4940 / NBRC 14291 / NCTC 11154) (Bacteroides vulgatus).